The chain runs to 333 residues: HTH-type transcriptional repressor PurR (333 aa).

Residues alanine 2–valine 56 enclose the HTH lacI-type domain. A DNA-binding region (H-T-H motif) is located at residues isoleucine 4 to asparagine 23. Residues serine 48–valine 56 mediate DNA binding. Residues tyrosine 73, lysine 189, threonine 191, phenylalanine 220, and aspartate 274 each coordinate hypoxanthine.

In terms of assembly, homodimer.

The protein operates within purine metabolism; purine nucleotide biosynthesis [regulation]. In terms of biological role, is the main repressor of the genes involved in the de novo synthesis of purine nucleotides, regulating purB, purC, purEK, purF, purHD, purL, purMN and guaBA expression. PurR is allosterically activated to bind its cognate DNA by binding the purine corepressors, hypoxanthine or guanine, thereby effecting transcription repression. The chain is HTH-type transcriptional repressor PurR from Histophilus somni (strain 2336) (Haemophilus somnus).